A 321-amino-acid polypeptide reads, in one-letter code: Fe-S cluster assembly protein DRE2 (321 aa).

Positions 1–140 (MNNTAHSMSE…RRPASSSVAE (140 aa)) are N-terminal SAM-like domain. Positions 128–138 (IESRRPASSSV) are enriched in polar residues. The interval 128-166 (IESRRPASSSVAEKDSTASSGMGAVKLRRKPNENGGHQQ) is disordered. The linker stretch occupies residues 140–177 (EKDSTASSGMGAVKLRRKPNENGGHQQKKALLWATQPE). 4 residues coordinate [2Fe-2S] cluster: C202, C217, C220, and C222. Positions 202–222 (CTVDFSAPRTRRKRACKGCTC) are fe-S binding site A. The tract at residues 239 to 263 (QLDPSEVGGTGGKRTEVTTTVKGPN) is disordered. Residues C283, C286, C294, and C297 each contribute to the [4Fe-4S] cluster site. 2 short sequence motifs (cx2C motif) span residues 283-286 (CGSC) and 294-297 (CSSC). Residues 283–297 (CGSCFLGDAFRCSSC) are fe-S binding site B.

This sequence belongs to the anamorsin family. Monomer. Interacts with TAH18. Interacts with MIA40. The cofactor is [2Fe-2S] cluster. Requires [4Fe-4S] cluster as cofactor.

Its subcellular location is the cytoplasm. The protein localises to the mitochondrion intermembrane space. Its function is as follows. Component of the cytosolic iron-sulfur (Fe-S) protein assembly (CIA) machinery required for the maturation of extramitochondrial Fe-S proteins. Part of an electron transfer chain functioning in an early step of cytosolic Fe-S biogenesis, facilitating the de novo assembly of a [4Fe-4S] cluster on the scaffold complex CFD1-NBP35. Electrons are transferred to DRE2 from NADPH via the FAD- and FMN-containing protein TAH18. TAH18-DRE2 are also required for the assembly of the diferric tyrosyl radical cofactor of ribonucleotide reductase (RNR), probably by providing electrons for reduction during radical cofactor maturation in the catalytic small subunit RNR2. In Malassezia globosa (strain ATCC MYA-4612 / CBS 7966) (Dandruff-associated fungus), this protein is Fe-S cluster assembly protein DRE2.